Here is a 37-residue protein sequence, read N- to C-terminus: MVEPLLDGLVLGLVFATLGGLFYAAYQQYKRPNELGG.

A helical membrane pass occupies residues Leu5–Ala25.

This sequence belongs to the PetG family. In terms of assembly, the 4 large subunits of the cytochrome b6-f complex are cytochrome b6, subunit IV (17 kDa polypeptide, PetD), cytochrome f and the Rieske protein, while the 4 small subunits are PetG, PetL, PetM and PetN. The complex functions as a dimer.

Its subcellular location is the cellular thylakoid membrane. Component of the cytochrome b6-f complex, which mediates electron transfer between photosystem II (PSII) and photosystem I (PSI), cyclic electron flow around PSI, and state transitions. PetG is required for either the stability or assembly of the cytochrome b6-f complex. This is Cytochrome b6-f complex subunit 5 from Mastigocladus laminosus (Fischerella sp.).